Here is a 446-residue protein sequence, read N- to C-terminus: Exodeoxyribonuclease 7 large subunit (446 aa).

The protein belongs to the XseA family. In terms of assembly, heterooligomer composed of large and small subunits.

The protein resides in the cytoplasm. It carries out the reaction Exonucleolytic cleavage in either 5'- to 3'- or 3'- to 5'-direction to yield nucleoside 5'-phosphates.. In terms of biological role, bidirectionally degrades single-stranded DNA into large acid-insoluble oligonucleotides, which are then degraded further into small acid-soluble oligonucleotides. This Vibrio cholerae serotype O1 (strain ATCC 39541 / Classical Ogawa 395 / O395) protein is Exodeoxyribonuclease 7 large subunit.